We begin with the raw amino-acid sequence, 129 residues long: Small ribosomal subunit protein uS11 (129 aa).

The protein belongs to the universal ribosomal protein uS11 family. In terms of assembly, part of the 30S ribosomal subunit. Interacts with proteins S7 and S18. Binds to IF-3.

Located on the platform of the 30S subunit, it bridges several disparate RNA helices of the 16S rRNA. Forms part of the Shine-Dalgarno cleft in the 70S ribosome. In Bartonella quintana (strain Toulouse) (Rochalimaea quintana), this protein is Small ribosomal subunit protein uS11.